The chain runs to 291 residues: 4-hydroxy-tetrahydrodipicolinate synthase (291 aa).

Threonine 44 contacts pyruvate. Tyrosine 132 serves as the catalytic Proton donor/acceptor. The active-site Schiff-base intermediate with substrate is the lysine 160. Position 202 (isoleucine 202) interacts with pyruvate.

This sequence belongs to the DapA family. In terms of assembly, homotetramer; dimer of dimers.

The protein localises to the cytoplasm. It carries out the reaction L-aspartate 4-semialdehyde + pyruvate = (2S,4S)-4-hydroxy-2,3,4,5-tetrahydrodipicolinate + H2O + H(+). It participates in amino-acid biosynthesis; L-lysine biosynthesis via DAP pathway; (S)-tetrahydrodipicolinate from L-aspartate: step 3/4. Catalyzes the condensation of (S)-aspartate-beta-semialdehyde [(S)-ASA] and pyruvate to 4-hydroxy-tetrahydrodipicolinate (HTPA). This is 4-hydroxy-tetrahydrodipicolinate synthase from Rhodospirillum centenum (strain ATCC 51521 / SW).